The chain runs to 101 residues: uncharacterized protein (101 aa).

Residues 1 to 25 (MISIPFRSTMSRTLVFIILPTVLSC) form the signal peptide.

This is an uncharacterized protein from Saccharomyces cerevisiae (strain ATCC 204508 / S288c) (Baker's yeast).